Reading from the N-terminus, the 956-residue chain is Thrombospondin-3 (956 aa).

The first 22 residues, 1-22, serve as a signal peptide directing secretion; the sequence is METQELRGALALLLLCFFTSAS. The Laminin G-like domain maps to 23–193; sequence QDLQVIDLLT…VESMKIILGG (171 aa). Intrachain disulfides connect cysteine 278-cysteine 289, cysteine 283-cysteine 300, cysteine 303-cysteine 314, cysteine 320-cysteine 332, cysteine 326-cysteine 341, cysteine 344-cysteine 368, cysteine 374-cysteine 388, cysteine 382-cysteine 397, cysteine 400-cysteine 412, cysteine 418-cysteine 432, cysteine 426-cysteine 442, cysteine 444-cysteine 455, cysteine 471-cysteine 478, cysteine 483-cysteine 503, cysteine 519-cysteine 539, cysteine 542-cysteine 562, cysteine 578-cysteine 598, cysteine 601-cysteine 621, cysteine 639-cysteine 659, cysteine 679-cysteine 699, and cysteine 715-cysteine 936. The N-linked (GlcNAc...) asparagine glycan is linked to asparagine 310. In terms of domain architecture, EGF-like 1; calcium-binding spans 316-354; it reads DINECAHADPCFPGSSCINTMPGFHCEACPRGYKGTQVS. Positions 370–410 constitute an EGF-like 2; calcium-binding domain; it reads DIDECNDGNNGGCDPNSICTNTVGSFKCGPCRLGFLGNQSQ. Asparagine 407 carries an N-linked (GlcNAc...) asparagine glycan. Residues 414–456 form the EGF-like 3 domain; that stretch reads PARTCHSPAHSPCHIHAHCLFERNGAVSCQCNVGWAGNGNVCG. 8 TSP type-3 repeats span residues 457–491, 492–527, 528–550, 551–586, 587–609, 610–647, 648–687, and 688–723; these read TDTDIDGYPDQALPCMDNNKHCKQDNCLLTPNSGQ, EDADNDGVGDQCDDDADGDGIKNVEDNCRLFPNKDQ, QNSDTDSFGDACDNCPNVPNNDQ, KDTDGNGEGDACDNDVDGDGIPNGLDNCPKVPNPLQ, TDRDEDGVGDACDSCPEMSNPTQ, TDADSDLVGDVCDTNEDSDGDGHQDTKDNCPQLPNSSQ, LDSDNDGLGDECDGDDDNDGIPDYVPPGPDNCRLVPNPNQ, and KDSDGNGVGDVCEDDFDNDAVVDPLDVCPESAEVTL. Disordered stretches follow at residues 518 to 537 and 546 to 702; these read NCRLFPNKDQQNSDTDSFGD and PNND…CEDD. The segment covering 555–568 has biased composition (acidic residues); sequence GNGEGDACDNDVDG. Residues 612-628 show a composition bias toward acidic residues; it reads ADSDLVGDVCDTNEDSD. The N-linked (GlcNAc...) asparagine glycan is linked to asparagine 644. A compositionally biased stretch (acidic residues) spans 650–667; the sequence is SDNDGLGDECDGDDDNDG. The TSP C-terminal domain maps to 727–941; that stretch reads RAYQTVVLDP…LQYRCNDTVP (215 aa). Residue asparagine 937 is glycosylated (N-linked (GlcNAc...) asparagine).

Belongs to the thrombospondin family. In terms of assembly, oligomer; disulfide-linked.

Functionally, adhesive glycoprotein that mediates cell-to-cell and cell-to-matrix interactions. Can bind to fibrinogen, fibronectin, laminin and type V collagen. In Homo sapiens (Human), this protein is Thrombospondin-3 (THBS3).